A 590-amino-acid chain; its full sequence is Protein OS-9 homolog (590 aa).

Positions 1–19 (MRRPSLALLALSSLPFGSA) are cleaved as a signal peptide. The interval 83–106 (SAIRESATANADTDNGDESIGGTS) is disordered. N-linked (GlcNAc...) asparagine glycosylation occurs at asparagine 136. Residues 167–312 (NQCLHFVSGW…VIHTPRLCAD (146 aa)) form the MRH domain. Cysteines 169 and 182 form a disulfide. A mannooligosaccharide derivative is bound by residues tryptophan 176, tryptophan 177, and glutamine 189. A disordered region spans residues 198-248 (GGPPLRDKNSQEYILGTSLPPSSHSQKGKQIEVPNNEQKQLSPPPNTELQA). Disulfide bonds link cysteine 265–cysteine 298 and cysteine 280–cysteine 310. Aspartate 266, arginine 272, glutamate 294, and tyrosine 300 together coordinate a mannooligosaccharide derivative. 3 disordered regions span residues 357–376 (AAVTTEDQKQGSESGSPEKL), 436–472 (GDDNNNNNNNHHPKAGKGRKAAGAGKGQSGQKEMKKM), and 545–590 (YEDE…RDEL). Basic residues predominate over residues 446–455 (HHPKAGKGRK). Basic and acidic residues-rich tracts occupy residues 556–568 (EAGKDQKESKKGG) and 579–590 (EGSKEEYYRDEL). The Prevents secretion from ER signature appears at 587–590 (RDEL).

The protein belongs to the OS-9 family. Interacts with missfolded ER lumenal proteins.

It is found in the endoplasmic reticulum membrane. Its function is as follows. Lectin involved in the quality control of the secretory pathway. As a member of the endoplasmic reticulum-associated degradation lumenal (ERAD-L) surveillance system, targets misfolded endoplasmic reticulum lumenal glycoproteins for degradation. The sequence is that of Protein OS-9 homolog (yos-9) from Neurospora crassa (strain ATCC 24698 / 74-OR23-1A / CBS 708.71 / DSM 1257 / FGSC 987).